The chain runs to 403 residues: MADPKYADLPGIARNEPDLYETSDLPEDDQAEFDAEELTSTSVEHIIVNPNAAYDKFKDKKVGTRCLDFSDRITKSKRTGYESGEYEILGEGLGIKETPQQKYQRLLHEVQELTQEVEKTQSTLKESATEEKLTPVALAKQVAALKQQLVSTHLEKLLGPDAAINLTDPDGALAKRLLTQLDAAKTRKDPEGKSSAKGPGPDNENLVTYELHCRPEQNKFSQAAKMAELEKRLGELEAAVRCDQDTQNPLTVGLQGSCLMDTVEILQAKVNLLDVASLDQVEARLQSVLGKMNEIAKHKATIEDADTESKVHQLYETVQKWDSMSITLPQVVQRLLTLKQLHEQAMQFGQLLTHLDTTQQMISNSLKDNTNALAMVQKAMKENLATVEDNFSSIDGRIKKLSK.

Residues 1 to 26 (MADPKYADLPGIARNEPDLYETSDLP) form a disordered region. Positions 99–132 (PQQKYQRLLHEVQELTQEVEKTQSTLKESATEEK) form a coiled coil. Residues 183–206 (AAKTRKDPEGKSSAKGPGPDNENL) are disordered. Residues 184–194 (AKTRKDPEGKS) are compositionally biased toward basic and acidic residues. The stretch at 381–401 (KENLATVEDNFSSIDGRIKKL) forms a coiled coil.

This sequence belongs to the dynactin subunit 2 family. Subunit of dynactin, a multiprotein complex part of a tripartite complex with dynein and a adapter, such as BICDL1, BICD2 or HOOK3. The dynactin complex is built around ACTR1A/ACTB filament and consists of an actin-related filament composed of a shoulder domain, a pointed end and a barbed end. Its length is defined by its flexible shoulder domain. The soulder is composed of 2 DCTN1 subunits, 4 DCTN2 and 2 DCTN3.

The protein resides in the cytoplasm. It localises to the cytoskeleton. It is found in the microtubule organizing center. Its subcellular location is the centrosome. The protein localises to the membrane. Functionally, part of the dynactin complex that activates the molecular motor dynein for ultra-processive transport along microtubules. In the dynactin soulder domain, binds the ACTR1A filament and acts as a molecular ruler to determine the length. Modulates cytoplasmic dynein binding to an organelle, and plays a role in prometaphase chromosome alignment and spindle organization during mitosis. Involved in anchoring microtubules to centrosomes. The protein is Dynactin subunit 2-B (dctn2-b) of Xenopus laevis (African clawed frog).